We begin with the raw amino-acid sequence, 281 residues long: DegV domain-containing protein SCO2569 (281 aa).

The DegV domain maps to 5 to 280 (VAIVTDSTAY…PGLLGVVVSS (276 aa)). Hexadecanoate-binding residues include threonine 62 and serine 95.

In terms of biological role, may bind long-chain fatty acids, such as palmitate, and may play a role in lipid transport or fatty acid metabolism. This Streptomyces coelicolor (strain ATCC BAA-471 / A3(2) / M145) protein is DegV domain-containing protein SCO2569.